A 178-amino-acid chain; its full sequence is Large ribosomal subunit protein uL5 (178 aa).

Belongs to the universal ribosomal protein uL5 family. Part of the 50S ribosomal subunit; part of the 5S rRNA/L5/L18/L25 subcomplex. Contacts the 5S rRNA and the P site tRNA. Forms a bridge to the 30S subunit in the 70S ribosome.

Functionally, this is one of the proteins that bind and probably mediate the attachment of the 5S RNA into the large ribosomal subunit, where it forms part of the central protuberance. In the 70S ribosome it contacts protein S13 of the 30S subunit (bridge B1b), connecting the 2 subunits; this bridge is implicated in subunit movement. Contacts the P site tRNA; the 5S rRNA and some of its associated proteins might help stabilize positioning of ribosome-bound tRNAs. The chain is Large ribosomal subunit protein uL5 from Psychrobacter arcticus (strain DSM 17307 / VKM B-2377 / 273-4).